A 503-amino-acid polypeptide reads, in one-letter code: 60S ribosomal export protein NMD3 (503 aa).

N-acetylmethionine is present on Met-1. Phosphoserine is present on Ser-258. The Nuclear and nucleolar localization signal signature appears at 405–422 (KKSYDRTKRQRRRNWKLK). A necessary for the nuclear export of the 60S ribosomal subunit region spans residues 425 to 503 (ARERENMDTD…TGEEGASMLT (79 aa)). Thr-433 carries the post-translational modification Phosphothreonine. Ser-468 is modified (phosphoserine). A Phosphothreonine modification is found at Thr-470. The Nuclear export signal motif lies at 480-489 (LAEMLEDLHI).

The protein belongs to the NMD3 family. Found in a 60S ribosomal subunit export complex with RAN and XPO1. Interacts with XPO1. Associates with pre-60S ribosomal particles.

Its subcellular location is the cytoplasm. The protein resides in the nucleus. In terms of biological role, acts as an adapter for the XPO1/CRM1-mediated export of the 60S ribosomal subunit. This chain is 60S ribosomal export protein NMD3 (NMD3), found in Homo sapiens (Human).